We begin with the raw amino-acid sequence, 260 residues long: MLKRRIIPCLDVTAGRVVKGVQFLDLRDAGDPVELAARYDAEGADELVFLDITASAEGRETMVEVVRRTAKEVFIPLTVGGGVRTPADMYRLLRAGADKVSVNTAAVLDPDLIRVCAQRFGSQCVVLAIDARRRPEGGWEVYTHGGRRPTGLDVIEWAKQGVSLGAGEILLTSMDTDGTQQGYDLALLRAVVDAVGVPVIASGGAGTLEHLYQALTMGGAHAVLAASIFHFGRYSVAEAKRYLAARGVPVRHVSVEFTPS.

Catalysis depends on residues aspartate 11 and aspartate 130.

It belongs to the HisA/HisF family. Heterodimer of HisH and HisF.

It is found in the cytoplasm. The enzyme catalyses 5-[(5-phospho-1-deoxy-D-ribulos-1-ylimino)methylamino]-1-(5-phospho-beta-D-ribosyl)imidazole-4-carboxamide + L-glutamine = D-erythro-1-(imidazol-4-yl)glycerol 3-phosphate + 5-amino-1-(5-phospho-beta-D-ribosyl)imidazole-4-carboxamide + L-glutamate + H(+). It participates in amino-acid biosynthesis; L-histidine biosynthesis; L-histidine from 5-phospho-alpha-D-ribose 1-diphosphate: step 5/9. IGPS catalyzes the conversion of PRFAR and glutamine to IGP, AICAR and glutamate. The HisF subunit catalyzes the cyclization activity that produces IGP and AICAR from PRFAR using the ammonia provided by the HisH subunit. In Thermomicrobium roseum (strain ATCC 27502 / DSM 5159 / P-2), this protein is Imidazole glycerol phosphate synthase subunit HisF.